An 88-amino-acid polypeptide reads, in one-letter code: Small ribosomal subunit protein bS20 (88 aa).

Belongs to the bacterial ribosomal protein bS20 family.

Functionally, binds directly to 16S ribosomal RNA. This Rhodopseudomonas palustris (strain BisB18) protein is Small ribosomal subunit protein bS20.